We begin with the raw amino-acid sequence, 51 residues long: uncharacterized protein (51 aa).

A helical membrane pass occupies residues 20 to 42 (NFFSRMWNAVVFGFGAAIGASVA).

The protein resides in the membrane. This is an uncharacterized protein from Schizosaccharomyces pombe (strain 972 / ATCC 24843) (Fission yeast).